The chain runs to 71 residues: Translation initiation factor IF-1 (71 aa).

The S1-like domain occupies 1-71 (MSKQEMLSFS…LTKGRITFRG (71 aa)).

It belongs to the IF-1 family. In terms of assembly, component of the 30S ribosomal translation pre-initiation complex which assembles on the 30S ribosome in the order IF-2 and IF-3, IF-1 and N-formylmethionyl-tRNA(fMet); mRNA recruitment can occur at any time during PIC assembly.

Its subcellular location is the cytoplasm. One of the essential components for the initiation of protein synthesis. Stabilizes the binding of IF-2 and IF-3 on the 30S subunit to which N-formylmethionyl-tRNA(fMet) subsequently binds. Helps modulate mRNA selection, yielding the 30S pre-initiation complex (PIC). Upon addition of the 50S ribosomal subunit IF-1, IF-2 and IF-3 are released leaving the mature 70S translation initiation complex. In Pelagibacter ubique (strain HTCC1062), this protein is Translation initiation factor IF-1.